Reading from the N-terminus, the 94-residue chain is Venom protein 59.1 (94 aa).

The signal sequence occupies residues 1 to 22 (MNSREMFCVFILFASFFYCSYA). 6 disulfides stabilise this stretch: cysteine 19–cysteine 47, cysteine 26–cysteine 49, cysteine 32–cysteine 50, cysteine 38–cysteine 53, cysteine 61–cysteine 76, and cysteine 70–cysteine 91. Positions 23–94 (EQECNCDKSC…GEALEICLRA (72 aa)) constitute an IGFBP N-terminal domain.

In terms of tissue distribution, expressed by the venom gland.

It localises to the secreted. The chain is Venom protein 59.1 from Lychas mucronatus (Chinese swimming scorpion).